Here is a 463-residue protein sequence, read N- to C-terminus: Glucagon-like peptide 1 receptor (463 aa).

Residues 1–21 (MASTPSLLRLALLLLGAVGRA) form the signal peptide. Over 22-139 (GPRPQGTTVS…KRGERNFPEE (118 aa)) the chain is Extracellular. 3 cysteine pairs are disulfide-bonded: cysteine 46/cysteine 71, cysteine 62/cysteine 104, and cysteine 85/cysteine 126. N-linked (GlcNAc...) asparagine glycans are attached at residues asparagine 63, asparagine 82, and asparagine 115. The helical transmembrane segment at 140-164 (QLLSLYIIYTVGYALSFSALVIASA) threads the bilayer. Over 165-175 (ILVGFRHLHCT) the chain is Cytoplasmic. The helical transmembrane segment at 176–201 (RNYIHLNLFASFILRALSVFIKDAAL) threads the bilayer. Topologically, residues 202-227 (KWMYSTAAQQHQWDGLLSYQDSLGCR) are extracellular. A disulfide bridge links cysteine 226 with cysteine 296. A helical transmembrane segment spans residues 228–251 (LVFLLMQYCVAANYYWLLVEGVYL). At 252–265 (YTLLAFSVFSEQRI) the chain is on the cytoplasmic side. A helical transmembrane segment spans residues 266-290 (FKLYLSIGWGVPLLFVIPWGIVKYL). The Extracellular portion of the chain corresponds to 291-305 (YEDEGCWTRNSNMNY). A helical transmembrane segment spans residues 306 to 328 (WLIIRLPILFAIGVNFLIFIRVI). The Cytoplasmic segment spans residues 329–348 (CIVVSKLKANLMCKTDIKCR). Cysteine 341 is subject to ADP-ribosylcysteine. Arginine 348 is subject to ADP-ribosylarginine. Residues 349 to 370 (LAKSTLTLIPLLGTHEVIFAFV) traverse the membrane as a helical segment. Residues 352-355 (STLT) form an important for allosteric inhibitor binding region. At 371–383 (MDEHARGTLRFIK) the chain is on the extracellular side. Residues 384 to 404 (LFTELSFTSFQGLMVAILYCF) form a helical membrane-spanning segment. At 405–463 (VNNEVQMEFRKCWERWRLEHLNIQRDCSMKPLKCPTSSVSSGATVGSSVYAATCQSSYS) the chain is on the cytoplasmic side.

This sequence belongs to the G-protein coupled receptor 2 family. In terms of assembly, may form homodimers and heterodimers with GIPR. Post-translationally, N-glycosylation enhances cell surface expression and lengthens receptor half-life by preventing degradation in the ER. Detected in pancreatic islets (at protein level). Detected in pancreatic islets and lungs.

The protein resides in the cell membrane. Functionally, G-protein coupled receptor for glucagon-like peptide 1 (GLP-1). Ligand binding triggers activation of a signaling cascade that leads to the activation of adenylyl cyclase and increased intracellular cAMP levels. Plays a role in regulating insulin secretion in response to GLP-1. This chain is Glucagon-like peptide 1 receptor (Glp1r), found in Mus musculus (Mouse).